Reading from the N-terminus, the 258-residue chain is MSDLKAAALRALKLMDLTTLNDNDTDEAVIALCKNAKTAVGNTAAVCIYPRFIPIAKKTLREQGTPEVRIATVTNFPHGNDDIEIAVAETKAAVAYGADEVDVVFPYRALIAGDETTGFELVKQCKEACGDVLLKVIIETGELKEEALIKKASQICIEAGANFIKTSTGKVPVNATPEYARMMLEVIRDMDVAKTVGFKPAGGVRTAEDAQAYLAMADDILGGDWADNMHYRFGASSLLTNLLNTLEVTEETADPSAY.

D102 acts as the Proton donor/acceptor in catalysis. The active-site Schiff-base intermediate with acetaldehyde is K165. The active-site Proton donor/acceptor is the K199.

This sequence belongs to the DeoC/FbaB aldolase family. DeoC type 2 subfamily.

Its subcellular location is the cytoplasm. The enzyme catalyses 2-deoxy-D-ribose 5-phosphate = D-glyceraldehyde 3-phosphate + acetaldehyde. It functions in the pathway carbohydrate degradation; 2-deoxy-D-ribose 1-phosphate degradation; D-glyceraldehyde 3-phosphate and acetaldehyde from 2-deoxy-alpha-D-ribose 1-phosphate: step 2/2. Functionally, catalyzes a reversible aldol reaction between acetaldehyde and D-glyceraldehyde 3-phosphate to generate 2-deoxy-D-ribose 5-phosphate. The sequence is that of Deoxyribose-phosphate aldolase from Aliivibrio fischeri (strain ATCC 700601 / ES114) (Vibrio fischeri).